The following is a 778-amino-acid chain: Hyaluronate lyase (778 aa).

A signal peptide (tat-type signal) is located at residues 1–33 (MSWNRRSFLGALGVTCLAGAGMVPIVRPRTAAA). Active-site residues include asparagine 200, histidine 250, and tyrosine 259.

It belongs to the polysaccharide lyase 8 family. Post-translationally, predicted to be exported by the Tat system. The position of the signal peptide cleavage has not been experimentally proven.

It carries out the reaction [hyaluronan](n) = n 3-(4-deoxy-beta-D-gluc-4-enuronosyl)-N-acetyl-D-glucosamine + H2O. Its activity is regulated as follows. Is salt-dependent and is active over a wide range of NaCl concentrations. Activity is slightly promoted by Ni(2+), and inhibited by most of the tested metal ions, including Li(+), K(+), Ba(2+), Mg(2+), Zn(2+), Ca(2+), Mn(2+) and Al(3+). Degrades hyaluronic acid into unsaturated disaccharides as the end products. Exhibits very low activity against various types of chondroitin sulfate variants. In Thermasporomyces composti, this protein is Hyaluronate lyase.